The following is a 431-amino-acid chain: Isocitrate lyase (431 aa).

The tract at residues 1–21 is disordered; sequence MSNVGTPRTAQEIQQDWDTNP. Residue 93 to 95 participates in substrate binding; sequence SGW. Asp155 provides a ligand contact to Mg(2+). Catalysis depends on Cys193, which acts as the Proton acceptor. Substrate-binding positions include 194-195, Arg230, 315-319, and Thr349; these read GH and NCSPS.

It belongs to the isocitrate lyase/PEP mutase superfamily. Isocitrate lyase family. As to quaternary structure, homotetramer. The cofactor is Mg(2+).

It carries out the reaction D-threo-isocitrate = glyoxylate + succinate. It functions in the pathway carbohydrate metabolism; glyoxylate cycle; (S)-malate from isocitrate: step 1/2. Functionally, involved in the metabolic adaptation in response to environmental changes. Catalyzes the reversible formation of succinate and glyoxylate from isocitrate, a key step of the glyoxylate cycle, which operates as an anaplerotic route for replenishing the tricarboxylic acid cycle during growth on fatty acid substrates. The protein is Isocitrate lyase (aceA) of Corynebacterium efficiens (strain DSM 44549 / YS-314 / AJ 12310 / JCM 11189 / NBRC 100395).